The sequence spans 391 residues: MAIFRDRTDKQVDHDRAIEDKRRHRQLVEKSIKENLGDILSEESIVGQSKNKKFKIPIKSIKEYQFVYGKNSKGVATGTGEEKRGDKIESGSKKAMGKGNKGAGNEEGDEIYETEITLDELMEYISDELNLPNLDEKKYSEIITDSCGKKKGYQRHGIRPRLAKKRTVMAKISRKQSKKRALIEEGKDYKTERFPFREEDLRYYKVKMQPKKASNAVMIFIMDASGSMDSTKKYLARSYFFVLSRFLKRKYNNIAFEFIYHTTIAKRVSEYEFFHKSESGGTYISSGIVEAIKLIDEKYPPSEWNIYPVYASDGDNWSEDNVKAIESVKEICKISNMFGYAELLPSTYTQTMYYKFNKEINEKNFISVVIKEKKDLWEALKTMLKQELKED.

Disordered regions lie at residues 1 to 23 and 75 to 107; these read MAIF…DKRR and VATG…GNEE. Over residues 80-92 the composition is skewed to basic and acidic residues; sequence GEEKRGDKIESGS.

It belongs to the UPF0229 family.

This is UPF0229 protein CLL_A3091 from Clostridium botulinum (strain Eklund 17B / Type B).